We begin with the raw amino-acid sequence, 343 residues long: Heat-inducible transcription repressor HrcA (343 aa).

The protein belongs to the HrcA family.

Functionally, negative regulator of class I heat shock genes (grpE-dnaK-dnaJ and groELS operons). Prevents heat-shock induction of these operons. The chain is Heat-inducible transcription repressor HrcA from Thermobifida fusca (strain YX).